The following is a 98-amino-acid chain: UPF0235 protein APJL_1398 (98 aa).

Belongs to the UPF0235 family.

This Actinobacillus pleuropneumoniae serotype 3 (strain JL03) protein is UPF0235 protein APJL_1398.